The primary structure comprises 154 residues: tRNA (cytidine(34)-2'-O)-methyltransferase (154 aa).

S-adenosyl-L-methionine is bound by residues L78, G100, I122, and S130.

Belongs to the class IV-like SAM-binding methyltransferase superfamily. RNA methyltransferase TrmH family. TrmL subfamily. Homodimer.

It is found in the cytoplasm. The catalysed reaction is cytidine(34) in tRNA + S-adenosyl-L-methionine = 2'-O-methylcytidine(34) in tRNA + S-adenosyl-L-homocysteine + H(+). It carries out the reaction 5-carboxymethylaminomethyluridine(34) in tRNA(Leu) + S-adenosyl-L-methionine = 5-carboxymethylaminomethyl-2'-O-methyluridine(34) in tRNA(Leu) + S-adenosyl-L-homocysteine + H(+). Methylates the ribose at the nucleotide 34 wobble position in the two leucyl isoacceptors tRNA(Leu)(CmAA) and tRNA(Leu)(cmnm5UmAA). Catalyzes the methyl transfer from S-adenosyl-L-methionine to the 2'-OH of the wobble nucleotide. This chain is tRNA (cytidine(34)-2'-O)-methyltransferase, found in Saccharophagus degradans (strain 2-40 / ATCC 43961 / DSM 17024).